A 238-amino-acid chain; its full sequence is Opacity protein opA68 (238 aa).

A signal peptide is located at residue A1. The segment at 88–109 (NLQRRTSNGNRRDRKTENQENG) is disordered.

This sequence belongs to the opacity porin family.

It is found in the cell outer membrane. In terms of biological role, implicated in a number of adherence functions. OPA proteins are implicated in pathogenesis and are subject to phase variation. The sequence is that of Opacity protein opA68 from Neisseria gonorrhoeae.